The chain runs to 655 residues: MFFSLLLVLGLTEAEKIKICLQKQVNSSFSLHNGFGGNLYATEEKRMFELVKPKAGASVLNQSTWIGFGDSRTDKSNSAFPRSADVSAKTADKFRFLSGGSLMLSMFGPPGKVDYLYQGCGKHKVFYEGVNWSPHAAINCYRKNWTDIKLNFQKNIYELASQSHCMSLVNALDKTIPLQVTAGTAGNCNNSFLKNPALYTQEVKPSENKCGKENLAFFTLPTQFGTYECKLHLVASCYFIYDSKEVYNKRGCDNYFQVIYDSFGKVVGGLDNRVSPYTGNSGDTPTMQCDMLQLKPGRYSVRSSPRFLLMPERSYCFDMKEKGPVTAVQSIWGKGRESDYAVDQACLSTPGCMLIQKQKPYIGEADDHHGDQEMRELLSGLDYEARCISQSGWVNETSPFTEKYLLPPKFGRCPLAAKEESIPKIPDGLLIPTSGTDTTVTKPKSRIFGIDDLIIGVLFVAIVETGIGGYLLGSRKESGGGVTKESAEKGFEKIGNDIQILKSSINIAIEKLNDRISHDEQAIRDLTLEIENARSEALLGELGIIRALLVGNISIGLQESLWELASEITNRAGDLAVEVSPGCWIIDNNICDQSCQNFIFKFNETAPVPTIPPLDTKIDLQSDPFYWGSSLGLAITATISLAALVISGIAICRTK.

An N-terminal signal peptide occupies residues Met-1–Ala-14. Residues Glu-15–Tyr-40 are fusion domain-1. The Extracellular segment spans residues Glu-15–Ser-630. Intrachain disulfides connect Cys-20/Cys-583, Cys-120/Cys-165, Cys-140/Cys-188, Cys-210/Cys-252, Cys-229/Cys-316, Cys-237/Cys-289, and Cys-346/Cys-352. 2 N-linked (GlcNAc...) asparagine; by host glycosylation sites follow: Asn-26 and Asn-61. Esterase domain-1 stretches follow at residues Ala-41–Asn-151 and Ala-41–Glu-158. Ser-71 functions as the Nucleophile in the catalytic mechanism. Residues Asn-144 and Asn-189 are each glycosylated (N-linked (GlcNAc...) asparagine; by host). N-acetyl-9-O-acetylneuraminic acid binding regions lie at residues Asn-151–Met-310 and Glu-158–Met-310. Esterase domain-2 regions lie at residues Met-310 to Glu-364 and Pro-311 to Ala-365. Fusion domain-2 stretches follow at residues Ala-365–Ala-650 and Asp-366–Ile-651. Residues Asp-366 and His-369 each act as charge relay system in the active site. Asn-395, Asn-552, and Asn-603 each carry an N-linked (GlcNAc...) asparagine; by host glycan. A helical membrane pass occupies residues Leu-631–Ile-651. The Cytoplasmic segment spans residues Cys-652–Lys-655.

The protein belongs to the influenza viruses hemagglutinin family. As to quaternary structure, homotrimer of disulfide-linked HEF1-HEF2. In natural infection, inactive HEF is matured into HEF1 and HEF2 outside the cell by one or more trypsin-like, arginine-specific endoprotease.

The protein resides in the virion membrane. Its subcellular location is the host cell membrane. The catalysed reaction is N-acetyl-9-O-acetylneuraminate + H2O = N-acetylneuraminate + acetate + H(+). The enzyme catalyses N-acetyl-4-O-acetylneuraminate + H2O = N-acetylneuraminate + acetate + H(+). Binds to the N-acetyl-9-O-acetylneuraminic acid residues on the cell surface, bringing about the attachment of the virus particle to the cell. Plays a major role in the determination of host range restriction and virulence. Class I viral fusion protein. Responsible for penetration of the virus into the cell cytoplasm by mediating the fusion of the membrane of the endocytosed virus particle with the endosomal membrane. Low pH in endosomes induce an irreversible conformational change in HEF2, releasing the fusion hydrophobic peptide. Several trimers are required to form a competent fusion pore. Displays a receptor-destroying activity which is a neuraminidate-O-acetyl esterase. This activity cleaves off any receptor on the cell surface, which would otherwise prevent virions release. These cleavages prevent self-aggregation and ensure the efficient spread of the progeny virus from cell to cell. This chain is Hemagglutinin-esterase-fusion glycoprotein, found in Homo sapiens (Human).